The sequence spans 274 residues: Protein CIMAP1C (274 aa).

Positions 1-27 are disordered; the sequence is MKLPKGTRSSVYFAQHPEKEPLPSRQE. Basic and acidic residues predominate over residues 16–27; that stretch reads HPEKEPLPSRQE. STPGR repeat units follow at residues 199-224 and 235-260; these read PGPTTYARPEPSIYQNRSPTYSMAKR and PGPGSHEVQQVTVHKPHIPAFTMGIK.

It belongs to the CIMAP family.

In Homo sapiens (Human), this protein is Protein CIMAP1C.